A 496-amino-acid polypeptide reads, in one-letter code: MDKKMRILCEVCLGDKNIDKLINEIRSNIRLKEASVPKCRSMITNIMEKNLEKLSRPPRSREEIEKLYFYLNTQCVNNIIEIIAKKYPNLHVNKKKNACKEQMKRDLDTWGNRRNHVLDRPFIKPRRENSDDEDEQQDGPKNSDFGFMGHTSDSQYASPFENHSITNLPIGQKQPFNNPHQSNRNTSDFESRLQQYMNERDYDLPRNQPPPEIDFTLDHSGEKVMKEKLMRKMGAQSGMNGMDDMGGVCGFNGMSGMNGVGGMDDFYASILGQGSPMAQEGSLGSLNPMNLMTPINRNNQMNPMNQMNPMNQMNPMNQMNPMNQMNPMNQMNPMNQMNPMNPMNMGNQNNQNGIPFMGMGNPLMSVSSTNLMNDQMGYGGFGQSEKNIQFQNDLEKKLAERKIMDLETGQRPEQSAYNDMQSHQMMGSLGSMMNPMGQMNQMGQMNQMGQMGQMNQMDPMNIMNPMNLMNQMNQINSMNQMPMNQMYCNMPNTINC.

A compositionally biased stretch (basic and acidic residues) spans 118–129 (LDRPFIKPRREN). Residues 118–187 (LDRPFIKPRR…NPHQSNRNTS (70 aa)) are disordered. Residues 151 to 187 (TSDSQYASPFENHSITNLPIGQKQPFNNPHQSNRNTS) are compositionally biased toward polar residues.

This is an uncharacterized protein from Acanthamoeba polyphaga mimivirus (APMV).